Consider the following 504-residue polypeptide: L-amino-acid oxidase (504 aa).

The signal sequence occupies residues 1–18 (MNIFFMFSLLFLATLGSC). Cys-28 and Cys-191 form a disulfide bridge. Residues 61–62 (MS), 81–82 (EA), Arg-89, and 105–108 (GPMR) each bind FAD. Arg-108 serves as a coordination point for substrate. Asn-190 is a glycosylation site (N-linked (GlcNAc...) asparagine). His-241 lines the substrate pocket. Residue Val-279 participates in FAD binding. Cys-349 and Cys-430 are disulfide-bonded. The N-linked (GlcNAc...) asparagine glycan is linked to Asn-379. A substrate-binding site is contributed by Tyr-390. FAD contacts are provided by residues Glu-475 and 482 to 487 (GWIDST). 482–483 (GW) is a binding site for substrate.

Belongs to the flavin monoamine oxidase family. FIG1 subfamily. As to quaternary structure, homodimer; non-covalently linked. FAD is required as a cofactor. Expressed by the venom gland.

It is found in the secreted. It catalyses the reaction an L-alpha-amino acid + O2 + H2O = a 2-oxocarboxylate + H2O2 + NH4(+). Catalyzes an oxidative deamination of predominantly hydrophobic and aromatic L-amino acids, thus producing hydrogen peroxide that may contribute to the diverse toxic effects of this enzyme. Exhibits diverse biological activities, such as hemorrhage, hemolysis, edema, apoptosis of vascular endothelial cells or tumor cell lines, antibacterial and antiparasitic activities, as well as regulation of platelet aggregation. Its effect on platelets is controversial, since it either induces aggregation or inhibits agonist-induced aggregation. These different effects are probably due to different experimental conditions. The sequence is that of L-amino-acid oxidase from Echis ocellatus (Ocellated saw-scaled viper).